A 223-amino-acid chain; its full sequence is Translation initiation factor 6 (223 aa).

It belongs to the eIF-6 family. Associates with the 50S ribosomal subunit, specifically with protein L14. Binds to 23S rRNA, possibly between where the 30S and 50S subunits associate to initiate translation. In terms of processing, modified in an unknown fashion (not phosphorylation) following release from 50S ribosomal subunits.

Binds to the 50S ribosomal subunit and prevents its association with the 30S ribosomal subunit to form the 70S initiation complex. Inhibits translation of both leadered and leaderless mRNAs, maybe by binding to the 50S ribosome subunit, preventing it from binding to the 30S subunit. The protein is Translation initiation factor 6 of Saccharolobus solfataricus (strain ATCC 35092 / DSM 1617 / JCM 11322 / P2) (Sulfolobus solfataricus).